A 500-amino-acid chain; its full sequence is uncharacterized protein (500 aa).

Positions 1–20 (MHSIIFKAAVALLGVSTAAG) are cleaved as a signal peptide. An N-linked (GlcNAc...) asparagine glycan is attached at asparagine 43. The FAD-binding PCMH-type domain maps to 60 to 232 (TALRPDCIIA…TAFTVKTHTQ (173 aa)). The residue at position 98 (histidine 98) is a Pros-8alpha-FAD histidine. Residues asparagine 194, asparagine 201, asparagine 246, asparagine 299, and asparagine 414 are each glycosylated (N-linked (GlcNAc...) asparagine).

It belongs to the oxygen-dependent FAD-linked oxidoreductase family. It depends on FAD as a cofactor.

It localises to the secreted. This is an uncharacterized protein from Arthroderma benhamiae (strain ATCC MYA-4681 / CBS 112371) (Trichophyton mentagrophytes).